A 245-amino-acid chain; its full sequence is 1-(5-phosphoribosyl)-5-[(5-phosphoribosylamino)methylideneamino] imidazole-4-carboxamide isomerase (245 aa).

Catalysis depends on D8, which acts as the Proton acceptor. The active-site Proton donor is D129.

The protein belongs to the HisA/HisF family.

Its subcellular location is the cytoplasm. It carries out the reaction 1-(5-phospho-beta-D-ribosyl)-5-[(5-phospho-beta-D-ribosylamino)methylideneamino]imidazole-4-carboxamide = 5-[(5-phospho-1-deoxy-D-ribulos-1-ylimino)methylamino]-1-(5-phospho-beta-D-ribosyl)imidazole-4-carboxamide. It participates in amino-acid biosynthesis; L-histidine biosynthesis; L-histidine from 5-phospho-alpha-D-ribose 1-diphosphate: step 4/9. This Trichlorobacter lovleyi (strain ATCC BAA-1151 / DSM 17278 / SZ) (Geobacter lovleyi) protein is 1-(5-phosphoribosyl)-5-[(5-phosphoribosylamino)methylideneamino] imidazole-4-carboxamide isomerase.